A 255-amino-acid chain; its full sequence is Pimeloyl-[acyl-carrier protein] methyl ester esterase (255 aa).

Residues 16-242 (LVLLHGWGMN…SSHAPFITEP (227 aa)) form the AB hydrolase-1 domain. Substrate-binding positions include Trp22, 82–83 (SL), and 143–147 (FMALQ). Residue Ser82 is the Nucleophile of the active site. Active-site residues include Asp207 and His235. His235 is a binding site for substrate.

This sequence belongs to the AB hydrolase superfamily. Carboxylesterase BioH family. As to quaternary structure, monomer.

It localises to the cytoplasm. The enzyme catalyses 6-carboxyhexanoyl-[ACP] methyl ester + H2O = 6-carboxyhexanoyl-[ACP] + methanol + H(+). It functions in the pathway cofactor biosynthesis; biotin biosynthesis. The physiological role of BioH is to remove the methyl group introduced by BioC when the pimeloyl moiety is complete. It allows to synthesize pimeloyl-ACP via the fatty acid synthetic pathway through the hydrolysis of the ester bonds of pimeloyl-ACP esters. In Vibrio vulnificus (strain YJ016), this protein is Pimeloyl-[acyl-carrier protein] methyl ester esterase.